A 90-amino-acid chain; its full sequence is Antitoxin epsilon 2 (90 aa).

This sequence belongs to the epsilon antitoxin family. In the presence of the zeta toxin, forms an inactive PezA(2)PezT(2) heterotetramer.

Functionally, antitoxin component of a type II toxin-antitoxin (TA) system. Neutralizes the toxic effect of zeta toxin. Part of a postsegregational killing (PSK) system involved in the killing of plasmid-free cells. Continuous synthesis of the epsilon antitoxin is required to counteract the zeta toxin. In Enterococcus faecalis (Streptococcus faecalis), this protein is Antitoxin epsilon 2.